The primary structure comprises 540 residues: Intestinal-type alkaline phosphatase 1 (540 aa).

The first 20 residues, 1–20 (MQGDWVLLLLLGLRIHLSFG), serve as a signal peptide directing secretion. Aspartate 62 provides a ligand contact to Mg(2+). Zn(2+) is bound by residues aspartate 62 and serine 112. Serine 112 serves as the catalytic Phosphoserine intermediate. A disulfide bridge links cysteine 141 with cysteine 203. A glycan (N-linked (GlcNAc...) asparagine) is linked at asparagine 142. Serine 175 lines the Mg(2+) pocket. The Ca(2+) site is built by glutamate 236, phenylalanine 289, and glutamate 290. N-linked (GlcNAc...) asparagine glycosylation occurs at asparagine 301. Aspartate 305 is a binding site for Ca(2+). A Mg(2+)-binding site is contributed by glutamate 331. The Zn(2+) site is built by aspartate 336, histidine 340, aspartate 377, and histidine 378. N-linked (GlcNAc...) asparagine glycosylation occurs at asparagine 428. Histidine 452 serves as a coordination point for Zn(2+). A disulfide bridge links cysteine 487 with cysteine 494. Residue asparagine 511 is the site of GPI-anchor amidated asparagine attachment. Residues 512–540 (SAITMNNVLLSLQLLVSMLLLVGTALVVS) constitute a propeptide, removed in mature form.

Belongs to the alkaline phosphatase family. In terms of assembly, homodimer. The cofactor is Mg(2+). Zn(2+) serves as cofactor. Requires Ca(2+) as cofactor.

Its subcellular location is the cell membrane. It carries out the reaction a phosphate monoester + H2O = an alcohol + phosphate. Its function is as follows. Alkaline phosphatase that can hydrolyze various phosphate compounds. The polypeptide is Intestinal-type alkaline phosphatase 1 (Alpi) (Rattus norvegicus (Rat)).